Here is an 88-residue protein sequence, read N- to C-terminus: Large ribosomal subunit protein bL27 (88 aa).

Positions 1–24 are disordered; that stretch reads MAHKKGTGSTRNGRDSNAKRLGVK.

The protein belongs to the bacterial ribosomal protein bL27 family.

In Synechococcus sp. (strain CC9605), this protein is Large ribosomal subunit protein bL27.